The primary structure comprises 431 residues: Glutamate-1-semialdehyde 2,1-aminomutase (431 aa).

Lys265 carries the post-translational modification N6-(pyridoxal phosphate)lysine.

The protein belongs to the class-III pyridoxal-phosphate-dependent aminotransferase family. HemL subfamily. As to quaternary structure, homodimer. Requires pyridoxal 5'-phosphate as cofactor.

Its subcellular location is the cytoplasm. The enzyme catalyses (S)-4-amino-5-oxopentanoate = 5-aminolevulinate. The protein operates within porphyrin-containing compound metabolism; protoporphyrin-IX biosynthesis; 5-aminolevulinate from L-glutamyl-tRNA(Glu): step 2/2. This Vibrio campbellii (strain ATCC BAA-1116) protein is Glutamate-1-semialdehyde 2,1-aminomutase.